A 118-amino-acid chain; its full sequence is UPF0342 protein BT9727_0768 (118 aa).

This sequence belongs to the UPF0342 family.

This chain is UPF0342 protein BT9727_0768, found in Bacillus thuringiensis subsp. konkukian (strain 97-27).